The sequence spans 3535 residues: Lysosomal-trafficking regulator (3535 aa).

The segment at 412–436 is disordered; it reads MESSASTAMPKQQQHPRHKRQRSSQ. One copy of the WD 1 repeat lies at 689 to 736; it reads TLSRRLIQLQLNSSDRASQLFQALLYKCSKHSRAKFWLDESSTPAKLE. Residues 1066 to 1096 are compositionally biased toward polar residues; it reads STHQEPTGVVNSPSGDSQQPRPRARSFNSGS. 2 disordered regions span residues 1066 to 1132 and 1592 to 1613; these read STHQ…NAGV and GEGQ…TLDG. Low complexity predominate over residues 1596–1610; that stretch reads PTGRSPGSSSSSRST. Residues 2686–2784 enclose the BEACH-type PH domain; sequence SLNSQILYNF…MREVFCDKIV (99 aa). The BEACH domain maps to 2784-3081; that stretch reads VATPDQSKVI…QLFKSPHPAS (298 aa). The disordered stretch occupies residues 3254-3287; it reads GIGGGGSERVDEAGNLHPTSSASSVNSSSISSGG. The segment covering 3273–3285 has biased composition (low complexity); that stretch reads SSASSVNSSSISS. WD repeat units follow at residues 3307–3346, 3442–3486, and 3489–3527; these read RHTD…YVRT, VHED…FVSE, and TGTS…GNAP.

In terms of assembly, interacts with Rab5; the interaction is independent of GDP or GTP. Interacts with msps.

The protein localises to the vesicle. The protein resides in the cytoplasm. Its subcellular location is the cytoskeleton. It is found in the spindle. It localises to the spindle pole. Its function is as follows. Adapter protein that regulates intracellular membrane fusion reactions. Regulates the fusion of lysosome-related organelles. Promotes microtubules nucleation and centrosomal recruitment of microtubule nucleating proteins such as msps. In syncytial embryos, during the formation of yolk granules, suppresses vesicle fusion events with lipid droplets, possibly via interaction with Rab5. In the eye, regulates pigment granules size. In hemocytes, required for the late steps of bacteria phagocytosis. In fat body, required for autophagosome maturation. This is Lysosomal-trafficking regulator from Drosophila melanogaster (Fruit fly).